Here is a 414-residue protein sequence, read N- to C-terminus: Phosphoglycerate kinase (414 aa).

Substrate-binding positions include 19–21, Arg-34, 57–60, Arg-114, and Arg-154; these read DLN and HQSK. Residues Glu-332 and 358–361 contribute to the ATP site; that span reads GGHS.

It belongs to the phosphoglycerate kinase family. Monomer.

It localises to the cytoplasm. The enzyme catalyses (2R)-3-phosphoglycerate + ATP = (2R)-3-phospho-glyceroyl phosphate + ADP. It functions in the pathway carbohydrate degradation; glycolysis; pyruvate from D-glyceraldehyde 3-phosphate: step 2/5. In Thermococcus onnurineus (strain NA1), this protein is Phosphoglycerate kinase.